The chain runs to 120 residues: Aspartate 1-decarboxylase (120 aa).

Residue Ser-25 is the Schiff-base intermediate with substrate; via pyruvic acid of the active site. The residue at position 25 (Ser-25) is a Pyruvic acid (Ser). Substrate is bound at residue Thr-57. The active-site Proton donor is Tyr-58. 72 to 74 (GAA) contributes to the substrate binding site.

This sequence belongs to the PanD family. As to quaternary structure, heterooctamer of four alpha and four beta subunits. Requires pyruvate as cofactor. Is synthesized initially as an inactive proenzyme, which is activated by self-cleavage at a specific serine bond to produce a beta-subunit with a hydroxyl group at its C-terminus and an alpha-subunit with a pyruvoyl group at its N-terminus.

Its subcellular location is the cytoplasm. It catalyses the reaction L-aspartate + H(+) = beta-alanine + CO2. It participates in cofactor biosynthesis; (R)-pantothenate biosynthesis; beta-alanine from L-aspartate: step 1/1. Functionally, catalyzes the pyruvoyl-dependent decarboxylation of aspartate to produce beta-alanine. The protein is Aspartate 1-decarboxylase of Helicobacter hepaticus (strain ATCC 51449 / 3B1).